A 94-amino-acid chain; its full sequence is Small ribosomal subunit protein bS18 (94 aa).

The protein belongs to the bacterial ribosomal protein bS18 family. In terms of assembly, part of the 30S ribosomal subunit. Forms a tight heterodimer with protein bS6.

Functionally, binds as a heterodimer with protein bS6 to the central domain of the 16S rRNA, where it helps stabilize the platform of the 30S subunit. The chain is Small ribosomal subunit protein bS18 from Acetivibrio thermocellus (strain ATCC 27405 / DSM 1237 / JCM 9322 / NBRC 103400 / NCIMB 10682 / NRRL B-4536 / VPI 7372) (Clostridium thermocellum).